A 344-amino-acid polypeptide reads, in one-letter code: Mitochondrial substrate carrier family protein D (344 aa).

Residues 1-22 lie on the Mitochondrial intermembrane side of the membrane; it reads MDSTKTNNKWAAAGILNSVGKD. Solcar repeat units lie at residues 17–104, 119–212, and 239–327; these read NSVG…CQSY, IPYH…MKRK, and VPAW…TRNL. A helical transmembrane segment spans residues 23 to 43; that stretch reads FVAGSVGGMSSIMAGHPFDTI. Residues 44-75 lie on the Mitochondrial matrix side of the membrane; sequence KVMLQDASGNLPKFKNGFQALKYIMKVDGIKG. The chain crosses the membrane as a helical span at residues 76–96; sequence IYRGLSVPLFSVSFTNSVFFA. The Mitochondrial intermembrane portion of the chain corresponds to 97–116; sequence TNNFCQSYFHPPCKDENGED. The chain crosses the membrane as a helical span at residues 117-137; that stretch reads ILIPYHKAAAAGAIAGGVISL. The Mitochondrial matrix portion of the chain corresponds to 138-186; sequence LITPRDLVKSKLQVQCRPFGSTNVSLQYKGPIDVIRQTIKRDGIKGMFK. The helical transmembrane segment at 187–207 threads the bilayer; that stretch reads GIRSTFCRDIPGDAVYFVVYE. Residues 208 to 238 are Mitochondrial intermembrane-facing; that stretch reads FMKRKLLALSKNNNNNNNNNDNNDNSSPKAG. Residues 239 to 259 traverse the membrane as a helical segment; the sequence is VPAWVAIGAGGCAGMSFWMSI. Over 260 to 301 the chain is Mitochondrial matrix; that stretch reads YPMDVVKTRIQTQPDHLPPQYTSVLQTITKIYREEGISVFFR. The helical transmembrane segment at 302–321 threads the bilayer; that stretch reads GFSATILRAFPTSAVNFLMY. The Mitochondrial intermembrane portion of the chain corresponds to 322 to 344; sequence ETTRNLLNSKDPFYNNNDHYNAE.

It belongs to the mitochondrial carrier (TC 2.A.29) family.

The protein resides in the mitochondrion inner membrane. Its function is as follows. Calcium-dependent mitochondrial solute carrier. Mitochondrial solute carriers shuttle metabolites, nucleotides, and cofactors through the mitochondrial inner membrane. This Dictyostelium discoideum (Social amoeba) protein is Mitochondrial substrate carrier family protein D (mcfD).